Reading from the N-terminus, the 538-residue chain is Putative cysteine ligase BshC (538 aa).

Residues 460–484 (KINEQIELLERMLKRNVEKKHEVEL) are a coiled coil.

The protein belongs to the BshC family.

Functionally, involved in bacillithiol (BSH) biosynthesis. May catalyze the last step of the pathway, the addition of cysteine to glucosamine malate (GlcN-Mal) to generate BSH. The polypeptide is Putative cysteine ligase BshC (Bacillus anthracis (strain A0248)).